We begin with the raw amino-acid sequence, 349 residues long: tRNA pseudouridine synthase D (349 aa).

Substrate is bound at residue F27. The Nucleophile role is filled by D80. Substrate is bound at residue N129. One can recognise a TRUD domain in the interval 155–303; that stretch reads GVPNYFGAQR…VEAARRAMLL (149 aa). Residue F329 participates in substrate binding.

It belongs to the pseudouridine synthase TruD family.

The enzyme catalyses uridine(13) in tRNA = pseudouridine(13) in tRNA. Its function is as follows. Responsible for synthesis of pseudouridine from uracil-13 in transfer RNAs. The chain is tRNA pseudouridine synthase D from Escherichia coli O6:H1 (strain CFT073 / ATCC 700928 / UPEC).